The primary structure comprises 691 residues: DNA ligase (691 aa).

NAD(+) is bound by residues 41-45 (DAEYD), 90-91 (SL), and Glu-130. Lys-132 (N6-AMP-lysine intermediate) is an active-site residue. Residues Arg-153, Glu-190, Lys-307, and Lys-331 each contribute to the NAD(+) site. Zn(2+) is bound by residues Cys-425, Cys-428, Cys-443, and Cys-449. Residues 610–691 (APQGVLAGKT…LHQLLEGNTP (82 aa)) enclose the BRCT domain.

The protein belongs to the NAD-dependent DNA ligase family. LigA subfamily. Mg(2+) is required as a cofactor. The cofactor is Mn(2+).

It carries out the reaction NAD(+) + (deoxyribonucleotide)n-3'-hydroxyl + 5'-phospho-(deoxyribonucleotide)m = (deoxyribonucleotide)n+m + AMP + beta-nicotinamide D-nucleotide.. Its function is as follows. DNA ligase that catalyzes the formation of phosphodiester linkages between 5'-phosphoryl and 3'-hydroxyl groups in double-stranded DNA using NAD as a coenzyme and as the energy source for the reaction. It is essential for DNA replication and repair of damaged DNA. The sequence is that of DNA ligase from Burkholderia ambifaria (strain MC40-6).